The following is a 505-amino-acid chain: Probable ribonuclease FAU-1 (505 aa).

Positions 389-408 (ISGHGSGTYDELGTPRESGD) are disordered.

Belongs to the FAU-1 family.

Probable RNase involved in rRNA stability through maturation and/or degradation of precursor rRNAs. Binds to RNA in loop regions with AU-rich sequences. The polypeptide is Probable ribonuclease FAU-1 (Haloquadratum walsbyi (strain DSM 16790 / HBSQ001)).